The chain runs to 422 residues: Probable zinc-type alcohol dehydrogenase-like protein L498 (422 aa).

The Zn(2+) site is built by cysteine 108, histidine 129, cysteine 160, cysteine 163, cysteine 166, cysteine 174, and cysteine 231.

Requires Zn(2+) as cofactor.

Its subcellular location is the host cytoplasm. The protein resides in the virion. The protein is Probable zinc-type alcohol dehydrogenase-like protein L498 of Acanthamoeba polyphaga (Amoeba).